Reading from the N-terminus, the 351-residue chain is Putative NBPF family member NBPF5 (351 aa).

Coiled-coil stretches lie at residues 10–43 (SERA…EKFL) and 69–115 (DSVL…KLRE). Positions 157 to 285 (HLVHKLSPEN…VPPRHHDKSN (129 aa)) are disordered. The segment covering 165–179 (ENDEDEDEDEDDKDE) has biased composition (acidic residues). The Olduvai domain occupies 174 to 261 (EDDKDEEVEK…EEEEALNIPP (88 aa)). The span at 192–202 (EVQKTEEKEVP) shows a compositional bias: basic and acidic residues. Residues 214–226 (SNSHNPSNSNQPH) are compositionally biased toward low complexity. 2 stretches are compositionally biased toward basic and acidic residues: residues 232–251 (TFKE…HPHD) and 264–273 (QNDHEEEEGK).

Belongs to the NBPF family. Expressed in brain and medulla.

Its subcellular location is the cytoplasm. The sequence is that of Putative NBPF family member NBPF5 from Homo sapiens (Human).